The chain runs to 427 residues: Glutamate-1-semialdehyde 2,1-aminomutase (427 aa).

Position 267 is an N6-(pyridoxal phosphate)lysine (lysine 267).

It belongs to the class-III pyridoxal-phosphate-dependent aminotransferase family. HemL subfamily. Homodimer. Requires pyridoxal 5'-phosphate as cofactor.

It localises to the cytoplasm. The catalysed reaction is (S)-4-amino-5-oxopentanoate = 5-aminolevulinate. It participates in porphyrin-containing compound metabolism; protoporphyrin-IX biosynthesis; 5-aminolevulinate from L-glutamyl-tRNA(Glu): step 2/2. The sequence is that of Glutamate-1-semialdehyde 2,1-aminomutase from Geotalea uraniireducens (strain Rf4) (Geobacter uraniireducens).